We begin with the raw amino-acid sequence, 501 residues long: Lysine--tRNA ligase (501 aa).

Mg(2+) contacts are provided by Glu-412 and Glu-419.

This sequence belongs to the class-II aminoacyl-tRNA synthetase family. In terms of assembly, homodimer. Requires Mg(2+) as cofactor.

The protein localises to the cytoplasm. It carries out the reaction tRNA(Lys) + L-lysine + ATP = L-lysyl-tRNA(Lys) + AMP + diphosphate. The chain is Lysine--tRNA ligase from Dechloromonas aromatica (strain RCB).